The chain runs to 235 residues: Transmembrane emp24 domain-containing protein 9 (235 aa).

The signal sequence occupies residues Met1 to Ala37. The Lumenal segment spans residues Leu38 to Arg202. The GOLD domain occupies Lys47–Val145. Positions Cys121–Lys160 are required for interaction with STX17. Asn125 carries N-linked (GlcNAc...) asparagine glycosylation. A coiled-coil region spans residues Glu154 to Tyr184. Lys160 carries the post-translational modification N6-acetyllysine. The chain crosses the membrane as a helical span at residues Val203–Met222. At Arg223–Val235 the chain is on the cytoplasmic side. A COPII vesicle coat-binding motif is present at residues Phe228–Phe229. The short motif at Phe228 to Val235 is the COPI vesicle coat-binding element.

The protein belongs to the EMP24/GP25L family. Monomer and homodimer in endoplasmic reticulum. Predominantly monomeric and to lesser extent homodimeric in endoplasmic reticulum-Golgi intermediate compartment and cis-Golgi network. Probably oligomerizes with other members of the EMP24/GP25L family such as TMED2, TMED7 and TMED10. Interacts with TMED5. Interacts (via C-terminus) with COPG1; the interaction involves dimeric TMED9. Interacts with PTPN2 and SPAST. Interacts with STX17; the interaction is direct. Post-translationally, N-linked glycosylated containing high mannose.

It localises to the endoplasmic reticulum membrane. It is found in the golgi apparatus. The protein resides in the cis-Golgi network membrane. The protein localises to the endoplasmic reticulum-Golgi intermediate compartment membrane. Its subcellular location is the trans-Golgi network membrane. Its function is as follows. Appears to be involved in vesicular protein trafficking, mainly in the early secretory pathway. In COPI vesicle-mediated retrograde transport involved in the coatomer recruitment to membranes of the early secretory pathway. Increases coatomer-dependent activity of ARFGAP2. Thought to play a crucial role in the specific retention of p24 complexes in cis-Golgi membranes; specifically contributes to the coupled localization of TMED2 and TMED10 in the cis-Golgi network. May be involved in organization of intracellular membranes, such as of the ER-Golgi intermediate compartment and the Golgi apparatus. Involved in ER localization of PTPN2. This Rattus norvegicus (Rat) protein is Transmembrane emp24 domain-containing protein 9 (Tmed9).